Reading from the N-terminus, the 1035-residue chain is Integrin alpha-9 (1035 aa).

An N-terminal signal peptide occupies residues 1–29 (MGGPAAPRGAGRLRALLLALVVAGIPAGA). The Extracellular segment spans residues 30-981 (YNLDPQRPVH…LEPRGYVVGW (952 aa)). FG-GAP repeat units follow at residues 35–96 (QRPV…PDRR), 111–174 (SCGK…AKGR), 182–232 (EYKK…NTYL), 233–289 (KLND…SGTL), 290–349 (IKIF…GALE), 351–408 (QLAL…GIVP), and 411–474 (SMKL…LPGS). Cystine bridges form between Cys-87/Cys-97, Cys-142/Cys-162, and Cys-179/Cys-194. Asn-225 carries an N-linked (GlcNAc...) asparagine glycan. Ca(2+)-binding residues include Asp-312, Asn-314, Asp-316, Asp-320, Asp-373, Asp-375, Asp-377, Asp-381, Asp-435, Asp-437, Asn-439, and Asp-443. N-linked (GlcNAc...) asparagine glycosylation occurs at Asn-476. An intrachain disulfide couples Cys-482 to Cys-491. Asn-493 carries N-linked (GlcNAc...) asparagine glycosylation. Residues Cys-497 and Cys-555 are joined by a disulfide bond. Asn-612 is a glycosylation site (N-linked (GlcNAc...) asparagine). A disulfide bridge links Cys-620 with Cys-625. N-linked (GlcNAc...) asparagine glycosylation is found at Asn-654, Asn-658, Asn-672, and Asn-676. Residues Cys-696 and Cys-706 are joined by a disulfide bond. 2 N-linked (GlcNAc...) asparagine glycosylation sites follow: Asn-807 and Asn-854. Disulfide bonds link Cys-855/Cys-891 and Cys-898/Cys-903. Asn-904 carries N-linked (GlcNAc...) asparagine glycosylation. A helical transmembrane segment spans residues 982–1002 (IIAISLLVGILIFLLLAVLLW). Topologically, residues 1003 to 1035 (KMGFFRRRYKEIIEAEKNRKENEDSWDWVQKNQ) are cytoplasmic. The GFFKR motif signature appears at 1005–1009 (GFFRR).

It belongs to the integrin alpha chain family. In terms of assembly, heterodimer of an alpha and a beta subunit. Alpha-9 (ITGA9) associates with beta-1 (ITGB1). Integrin ITGA9:ITGB1 interacts with FBLN5 (via N-terminus). Integrin ITGA9:ITGB1 interacts with SPP1/OPN (via N-terminus). Integrin ITGA9:ITGB1 interacts with TNC/TNFN3 (via the 3rd Fibronectin type-III domain). Integrin ITGA9:ITGB1 interacts with SVEP1/polydom (via Sushi domain 21); thereby inhibits Ca(2+) intracellular signaling and as a result represses vasocontraction. As to expression, expressed in vascular smooth muscle cells (at protein level). Expressed in the airway epithelium (at protein level).

The protein localises to the membrane. Its function is as follows. Integrin alpha-9/beta-1 (ITGA9:ITGB1) is a receptor for VCAM1, cytotactin and osteopontin. It recognizes the sequence A-E-I-D-G-I-E-L in cytotactin. ITGA9:ITGB1 may play a crucial role in SVEP1/polydom-mediated myoblast cell adhesion. Integrin ITGA9:ITGB1 represses PRKCA-mediated L-type voltage-gated channel Ca(2+) influx and ROCK-mediated calcium sensitivity in vascular smooth muscle cells via its interaction with SVEP1, thereby inhibiting vasocontraction. This is Integrin alpha-9 (ITGA9) from Homo sapiens (Human).